We begin with the raw amino-acid sequence, 116 residues long: Large ribosomal subunit protein uL18 (116 aa).

This sequence belongs to the universal ribosomal protein uL18 family. In terms of assembly, part of the 50S ribosomal subunit; part of the 5S rRNA/L5/L18/L25 subcomplex. Contacts the 5S and 23S rRNAs.

In terms of biological role, this is one of the proteins that bind and probably mediate the attachment of the 5S RNA into the large ribosomal subunit, where it forms part of the central protuberance. This is Large ribosomal subunit protein uL18 from Mycoplasma mycoides subsp. mycoides SC (strain CCUG 32753 / NCTC 10114 / PG1).